Consider the following 293-residue polypeptide: MHKDIATPIRTQEILKKYGFSFKKSLGQNFLIDPNILRNIVSHAKLTENSGAIEVGPGIGALTEHLARSAKKVVSFEIDQRLLPVLEDTLSPYNNVSIVHSDILKADVAKVIAEEMPGIEDIMVVANLPYYVTTPILMKLLNDRLPIRGFVVMMQKEVADRITAKPGTKEYGSLSIAIQYYVKADIAMTVPKTVFMPQPNVDSAVIRLIKHDEPPVKVINEDFLFVVTRASFVQRRKTIYNNLQAGLPNGKTQKDFILEALAAANIEPTRRGETLTIQEFGKLADALYPVFAK.

S-adenosyl-L-methionine contacts are provided by Asn-29, Leu-31, Gly-56, Glu-77, Asp-102, and Asn-127.

This sequence belongs to the class I-like SAM-binding methyltransferase superfamily. rRNA adenine N(6)-methyltransferase family. RsmA subfamily.

The protein resides in the cytoplasm. The enzyme catalyses adenosine(1518)/adenosine(1519) in 16S rRNA + 4 S-adenosyl-L-methionine = N(6)-dimethyladenosine(1518)/N(6)-dimethyladenosine(1519) in 16S rRNA + 4 S-adenosyl-L-homocysteine + 4 H(+). In terms of biological role, specifically dimethylates two adjacent adenosines (A1518 and A1519) in the loop of a conserved hairpin near the 3'-end of 16S rRNA in the 30S particle. May play a critical role in biogenesis of 30S subunits. The sequence is that of Ribosomal RNA small subunit methyltransferase A from Lysinibacillus sphaericus (strain C3-41).